A 318-amino-acid chain; its full sequence is 3'-5' exoribonuclease YhaM (318 aa).

Positions 163 to 279 (HVVSMLDLAK…LHYIDNLDAK (117 aa)) constitute an HD domain.

This sequence belongs to the YhaM family.

Shows a 3'-5' exoribonuclease activity. In Bacillus cytotoxicus (strain DSM 22905 / CIP 110041 / 391-98 / NVH 391-98), this protein is 3'-5' exoribonuclease YhaM.